Consider the following 394-residue polypeptide: 8-amino-7-oxononanoate synthase (394 aa).

Arg22 is a substrate binding site. 113-114 contacts pyridoxal 5'-phosphate; the sequence is GY. His138 provides a ligand contact to substrate. Pyridoxal 5'-phosphate contacts are provided by Ser184, His212, and Thr240. Lys243 carries the post-translational modification N6-(pyridoxal phosphate)lysine. Thr359 is a substrate binding site.

This sequence belongs to the class-II pyridoxal-phosphate-dependent aminotransferase family. BioF subfamily. In terms of assembly, homodimer. Requires pyridoxal 5'-phosphate as cofactor.

The enzyme catalyses 6-carboxyhexanoyl-[ACP] + L-alanine + H(+) = (8S)-8-amino-7-oxononanoate + holo-[ACP] + CO2. Its pathway is cofactor biosynthesis; biotin biosynthesis. Functionally, catalyzes the decarboxylative condensation of pimeloyl-[acyl-carrier protein] and L-alanine to produce 8-amino-7-oxononanoate (AON), [acyl-carrier protein], and carbon dioxide. In Janthinobacterium sp. (strain Marseille) (Minibacterium massiliensis), this protein is 8-amino-7-oxononanoate synthase.